Consider the following 315-residue polypeptide: 3-chlorobenzoate-3,4-dioxygenase reductase subunit (315 aa).

1–103 contacts FMN; sequence MVAIDQHDTY…GATTRISAPR (103 aa). An FAD-binding FR-type domain is found at 7–109; the sequence is HDTYSVRVIS…SAPRNAFALD (103 aa). Positions 228-315 constitute a 2Fe-2S ferredoxin-type domain; that stretch reads NEFTVNLARS…ALSPELTLDL (88 aa). [2Fe-2S] cluster-binding residues include cysteine 264, cysteine 269, cysteine 272, and cysteine 302.

The protein belongs to the PDR/VanB family. As to quaternary structure, this dioxygenase system consists of two proteins: phthalate oxygenase and phthalate oxygenase reductase. It depends on FMN as a cofactor.

The protein is 3-chlorobenzoate-3,4-dioxygenase reductase subunit (cbaB) of Comamonas testosteroni (Pseudomonas testosteroni).